The sequence spans 197 residues: Wadjet protein JetB (197 aa).

Its function is as follows. Component of antiplasmid transformation system Wadjet type I, composed of JetA, JetB, JetC and JetD. Expression of Wadjet type I in B.subtilis (strain BEST7003) reduces the transformation efficiency of plasmid pHCMC05. This chain is Wadjet protein JetB, found in Bacillus cereus (strain Q1).